The following is a 221-amino-acid chain: 2-C-methyl-D-erythritol 4-phosphate cytidylyltransferase (221 aa).

It belongs to the IspD/TarI cytidylyltransferase family. IspD subfamily.

The enzyme catalyses 2-C-methyl-D-erythritol 4-phosphate + CTP + H(+) = 4-CDP-2-C-methyl-D-erythritol + diphosphate. It functions in the pathway isoprenoid biosynthesis; isopentenyl diphosphate biosynthesis via DXP pathway; isopentenyl diphosphate from 1-deoxy-D-xylulose 5-phosphate: step 2/6. Functionally, catalyzes the formation of 4-diphosphocytidyl-2-C-methyl-D-erythritol from CTP and 2-C-methyl-D-erythritol 4-phosphate (MEP). This chain is 2-C-methyl-D-erythritol 4-phosphate cytidylyltransferase, found in Roseobacter denitrificans (strain ATCC 33942 / OCh 114) (Erythrobacter sp. (strain OCh 114)).